The chain runs to 166 residues: NAD(P)H-quinone oxidoreductase subunit I, chloroplastic (166 aa).

4Fe-4S ferredoxin-type domains lie at 55 to 84 (GRIHFEFDKCIACEVCVRVCPIDLPVVDWK) and 95 to 124 (LNYSIDFGICIFCGNCVEYCPTNCLSMTEE). Cysteine 64, cysteine 67, cysteine 70, cysteine 74, cysteine 104, cysteine 107, cysteine 110, and cysteine 114 together coordinate [4Fe-4S] cluster.

The protein belongs to the complex I 23 kDa subunit family. In terms of assembly, NDH is composed of at least 16 different subunits, 5 of which are encoded in the nucleus. [4Fe-4S] cluster is required as a cofactor.

The protein localises to the plastid. The protein resides in the chloroplast thylakoid membrane. It catalyses the reaction a plastoquinone + NADH + (n+1) H(+)(in) = a plastoquinol + NAD(+) + n H(+)(out). The enzyme catalyses a plastoquinone + NADPH + (n+1) H(+)(in) = a plastoquinol + NADP(+) + n H(+)(out). Its function is as follows. NDH shuttles electrons from NAD(P)H:plastoquinone, via FMN and iron-sulfur (Fe-S) centers, to quinones in the photosynthetic chain and possibly in a chloroplast respiratory chain. The immediate electron acceptor for the enzyme in this species is believed to be plastoquinone. Couples the redox reaction to proton translocation, and thus conserves the redox energy in a proton gradient. This chain is NAD(P)H-quinone oxidoreductase subunit I, chloroplastic, found in Raillardella argentea (Silky raillardella).